The sequence spans 205 residues: SREBP regulating gene protein (205 aa).

At 1–16 the chain is on the cytoplasmic side; the sequence is MVPCGAVLWRRLLRKR. The helical transmembrane segment at 17-35 threads the bilayer; sequence WVLGVVFGLSLVYFLSSTF. At 36–205 the chain is on the lumenal side; it reads KQEERTVRDR…GEYPPELLPV (170 aa). N-linked (GlcNAc...) asparagine glycosylation is present at Asn67.

It belongs to the SPRING family.

The protein localises to the golgi apparatus membrane. In terms of biological role, positively regulates hepatic SREBP signaling pathway by modulating the proper localization of SCAP (SREBP cleavage-activating protein) to the endoplasmic reticulum, thereby controlling the level of functional SCAP. The polypeptide is SREBP regulating gene protein (Gallus gallus (Chicken)).